The sequence spans 428 residues: Serine--tRNA ligase (428 aa).

235 to 237 (TAE) serves as a coordination point for L-serine. An ATP-binding site is contributed by 266–268 (RSE). L-serine is bound at residue glutamate 289. 353–356 (EISS) is an ATP binding site. Residue serine 389 participates in L-serine binding.

Belongs to the class-II aminoacyl-tRNA synthetase family. Type-1 seryl-tRNA synthetase subfamily. As to quaternary structure, homodimer. The tRNA molecule binds across the dimer.

It is found in the cytoplasm. The catalysed reaction is tRNA(Ser) + L-serine + ATP = L-seryl-tRNA(Ser) + AMP + diphosphate + H(+). It catalyses the reaction tRNA(Sec) + L-serine + ATP = L-seryl-tRNA(Sec) + AMP + diphosphate + H(+). Its pathway is aminoacyl-tRNA biosynthesis; selenocysteinyl-tRNA(Sec) biosynthesis; L-seryl-tRNA(Sec) from L-serine and tRNA(Sec): step 1/1. Catalyzes the attachment of serine to tRNA(Ser). Is also able to aminoacylate tRNA(Sec) with serine, to form the misacylated tRNA L-seryl-tRNA(Sec), which will be further converted into selenocysteinyl-tRNA(Sec). This chain is Serine--tRNA ligase, found in Pasteurella multocida (strain Pm70).